Consider the following 574-residue polypeptide: 4-oxocyclohexanecarboxylate 2-dehydrogenase (574 aa).

It belongs to the FAD-dependent oxidoreductase 2 family. In terms of assembly, monomer. Homodimer. It depends on FAD as a cofactor.

The enzyme catalyses 4-oxocyclohexane-1-carboxylate + O2 = 4-oxocyclohex-2-ene-1-carboxylate + H2O2. Inhibited by 5,5'-dithio-bis(2- nitrobenzoate) and N-bromosuccinimide, but not by thiol and chelating reagents. Functionally, desaturase involved in a cyclohexanecarboxylate (CHCA) degradation pathway. Catalyzes the conversion of 4-oxocyclohexanecarboxylate (4-oxoCHCA) to 4-oxocyclohexenecarboxylate. Is highly specific for 4-oxocyclohexanecarboxylic acid and shows only slight activity with 4-oxo-2-methylcyclohex-2-enecarboxylic acid. This Sinomonas cyclohexanicum (Corynebacterium cyclohexanicum) protein is 4-oxocyclohexanecarboxylate 2-dehydrogenase.